Consider the following 371-residue polypeptide: Alanine racemase (371 aa).

The active-site Proton acceptor; specific for D-alanine is the Lys35. Lys35 bears the N6-(pyridoxal phosphate)lysine mark. Position 130 (Arg130) interacts with substrate. Tyr256 (proton acceptor; specific for L-alanine) is an active-site residue. Met304 is a substrate binding site.

This sequence belongs to the alanine racemase family. Requires pyridoxal 5'-phosphate as cofactor.

The enzyme catalyses L-alanine = D-alanine. Its pathway is amino-acid biosynthesis; D-alanine biosynthesis; D-alanine from L-alanine: step 1/1. In terms of biological role, catalyzes the interconversion of L-alanine and D-alanine. May also act on other amino acids. In Verminephrobacter eiseniae (strain EF01-2), this protein is Alanine racemase (alr).